Here is a 452-residue protein sequence, read N- to C-terminus: UDP-glycosyltransferase 76E4 (452 aa).

UDP-alpha-D-glucose is bound by residues T274, 333-335 (APQ), 350-358 (HCGWNSTLE), and 372-375 (QGEQ).

Belongs to the UDP-glycosyltransferase family.

This chain is UDP-glycosyltransferase 76E4 (UGT76E4), found in Arabidopsis thaliana (Mouse-ear cress).